Reading from the N-terminus, the 500-residue chain is Glutamyl-tRNA(Gln) amidotransferase subunit A (500 aa).

Catalysis depends on charge relay system residues Lys-81 and Ser-161. The active-site Acyl-ester intermediate is the Ser-185.

The protein belongs to the amidase family. GatA subfamily. In terms of assembly, heterotrimer of A, B and C subunits.

The enzyme catalyses L-glutamyl-tRNA(Gln) + L-glutamine + ATP + H2O = L-glutaminyl-tRNA(Gln) + L-glutamate + ADP + phosphate + H(+). Functionally, allows the formation of correctly charged Gln-tRNA(Gln) through the transamidation of misacylated Glu-tRNA(Gln) in organisms which lack glutaminyl-tRNA synthetase. The reaction takes place in the presence of glutamine and ATP through an activated gamma-phospho-Glu-tRNA(Gln). This chain is Glutamyl-tRNA(Gln) amidotransferase subunit A, found in Rhodospirillum rubrum (strain ATCC 11170 / ATH 1.1.1 / DSM 467 / LMG 4362 / NCIMB 8255 / S1).